Consider the following 659-residue polypeptide: UvrABC system protein B (659 aa).

Residues 25 to 414 (EGVRRGAREQ…PSLVVEQIVR (390 aa)) form the Helicase ATP-binding domain. Residue 38-45 (GATGTGKT) participates in ATP binding. The Beta-hairpin signature appears at 91–114 (YYDYYQPEAYIPTTDTYIEKDALI). The Helicase C-terminal domain occupies 431-597 (QIDDLYAEIR…TIVKPVRDVI (167 aa)). Positions 620-655 (PKVVAKLRKEMMQAAKDLDFERAAEIRDIIFELEKK) constitute a UVR domain.

The protein belongs to the UvrB family. In terms of assembly, forms a heterotetramer with UvrA during the search for lesions. Interacts with UvrC in an incision complex.

The protein localises to the cytoplasm. The UvrABC repair system catalyzes the recognition and processing of DNA lesions. A damage recognition complex composed of 2 UvrA and 2 UvrB subunits scans DNA for abnormalities. Upon binding of the UvrA(2)B(2) complex to a putative damaged site, the DNA wraps around one UvrB monomer. DNA wrap is dependent on ATP binding by UvrB and probably causes local melting of the DNA helix, facilitating insertion of UvrB beta-hairpin between the DNA strands. Then UvrB probes one DNA strand for the presence of a lesion. If a lesion is found the UvrA subunits dissociate and the UvrB-DNA preincision complex is formed. This complex is subsequently bound by UvrC and the second UvrB is released. If no lesion is found, the DNA wraps around the other UvrB subunit that will check the other stand for damage. This is UvrABC system protein B from Symbiobacterium thermophilum (strain DSM 24528 / JCM 14929 / IAM 14863 / T).